A 92-amino-acid polypeptide reads, in one-letter code: Long neurotoxin 1 (92 aa).

An N-terminal signal peptide occupies residues 1 to 21; that stretch reads MKTLLLTLVVVTIVCLDLGYT. Disulfide bonds link Cys24–Cys42, Cys35–Cys63, Cys48–Cys52, Cys67–Cys79, and Cys80–Cys85.

Belongs to the three-finger toxin family. Long-chain subfamily. Type II alpha-neurotoxin sub-subfamily. In terms of tissue distribution, expressed by the venom gland.

It is found in the secreted. Its function is as follows. Binds with high affinity to muscular (alpha-1/CHRNA1) and neuronal (alpha-7/CHRNA7) nicotinic acetylcholine receptor (nAChR) and inhibits acetylcholine from binding to the receptor, thereby impairing neuromuscular and neuronal transmission. The polypeptide is Long neurotoxin 1 (Oxyuranus microlepidotus (Inland taipan)).